Consider the following 224-residue polypeptide: Cytochrome c oxidase subunit 2 (224 aa).

At M1–H26 the chain is on the mitochondrial intermembrane side. A helical transmembrane segment spans residues A27–N48. Residues T49 to E62 lie on the Mitochondrial matrix side of the membrane. Residues T63 to R82 traverse the membrane as a helical segment. Residues L83–N224 are Mitochondrial intermembrane-facing. 6 residues coordinate Cu cation: H161, C196, E198, C200, H204, and M207. E198 contacts Mg(2+).

This sequence belongs to the cytochrome c oxidase subunit 2 family. Component of the cytochrome c oxidase (complex IV, CIV), a multisubunit enzyme composed of a catalytic core of 3 subunits and several supernumerary subunits. The complex exists as a monomer or a dimer and forms supercomplexes (SCs) in the inner mitochondrial membrane with ubiquinol-cytochrome c oxidoreductase (cytochrome b-c1 complex, complex III, CIII). Cu cation is required as a cofactor.

The protein localises to the mitochondrion inner membrane. The catalysed reaction is 4 Fe(II)-[cytochrome c] + O2 + 8 H(+)(in) = 4 Fe(III)-[cytochrome c] + 2 H2O + 4 H(+)(out). In terms of biological role, component of the cytochrome c oxidase, the last enzyme in the mitochondrial electron transport chain which drives oxidative phosphorylation. The respiratory chain contains 3 multisubunit complexes succinate dehydrogenase (complex II, CII), ubiquinol-cytochrome c oxidoreductase (cytochrome b-c1 complex, complex III, CIII) and cytochrome c oxidase (complex IV, CIV), that cooperate to transfer electrons derived from NADH and succinate to molecular oxygen, creating an electrochemical gradient over the inner membrane that drives transmembrane transport and the ATP synthase. Cytochrome c oxidase is the component of the respiratory chain that catalyzes the reduction of oxygen to water. Electrons originating from reduced cytochrome c in the intermembrane space (IMS) are transferred via the dinuclear copper A center (CU(A)) of subunit 2 and heme A of subunit 1 to the active site in subunit 1, a binuclear center (BNC) formed by heme A3 and copper B (CU(B)). The BNC reduces molecular oxygen to 2 water molecules using 4 electrons from cytochrome c in the IMS and 4 protons from the mitochondrial matrix. This Albinaria turrita (Door snail) protein is Cytochrome c oxidase subunit 2 (COII).